Here is a 529-residue protein sequence, read N- to C-terminus: Cytochrome P450 monooxygenase oblE (529 aa).

Residues 38 to 58 traverse the membrane as a helical segment; it reads WQYIVTLLIAIITYDQVMYIW. Residue cysteine 477 coordinates heme.

Belongs to the cytochrome P450 family. Heme serves as cofactor.

The protein localises to the membrane. It functions in the pathway secondary metabolite biosynthesis; terpenoid biosynthesis. Functionally, cytochrome P450 monooxygenase; part of the gene cluster that mediates the biosynthesis of the sesterterpenes ophiobolins, fungal phytotoxins with potential anti-cancer activities. The first step of the pathway is performed by the sesterterpene synthase oblA that possesses both prenyl transferase and terpene cyclase activity, converting isopentenyl diphosphate and dimethylallyl diphosphate into geranylfarnesyl diphosphate (GFPP) and further converting GFPP into ophiobolin F, respectively. Other sesterterpenoids (C(25) terpenoids) are found as minor products of oblA. The cytochrome P450 monooxygenase oblB then catalyzes a four-step oxidative transformation of ophiobolin F to yield ophiobolin C. The function of the cytochrome P450 monooxygenase oblE has still to be determined. The sequence is that of Cytochrome P450 monooxygenase oblE from Emericella variicolor (Aspergillus stellatus).